The primary structure comprises 323 residues: ADP-ribose glycohydrolase MACROD1 (323 aa).

N6-succinyllysine is present on residues Lys-94, Lys-101, and Lys-127. Residue Lys-136 forms a Glycyl lysine isopeptide (Lys-Gly) (interchain with G-Cter in SUMO2) linkage. In terms of domain architecture, Macro spans 139-320 (DPKYKKDKQL…IYRERLPHYF (182 aa)). Residue 157–159 (GDI) coordinates substrate. N6-acetyllysine is present on Lys-161. Substrate contacts are provided by residues 170–172 (AAN), 177–182 (GGGGVD), 265–271 (ISTGVFG), and Phe-304.

It belongs to the MacroD-type family. MacroD1/2-like subfamily. Interacts with ESR1; Interacts in a manner that is estrogen independent but is enhanced by estrogen. Interacts (via macro domain) with AR.

The protein localises to the nucleus. The catalysed reaction is 3''-O-acetyl-ADP-D-ribose + H2O = ADP-D-ribose + acetate + H(+). It catalyses the reaction 2''-O-acetyl-ADP-D-ribose + H2O = ADP-D-ribose + acetate + H(+). The enzyme catalyses 4-O-(ADP-D-ribosyl)-L-aspartyl-[protein] + H2O = L-aspartyl-[protein] + ADP-D-ribose + H(+). It carries out the reaction 5-O-(ADP-D-ribosyl)-L-glutamyl-[protein] + H2O = L-glutamyl-[protein] + ADP-D-ribose + H(+). The catalysed reaction is alpha-NAD(+) + H2O = ADP-D-ribose + nicotinamide + H(+). With respect to regulation, subject to competitive inhibition by the product ADP-ribose. Its function is as follows. Removes ADP-ribose from aspartate and glutamate residues in proteins bearing a single ADP-ribose moiety. Inactive towards proteins bearing poly-ADP-ribose. Deacetylates O-acetyl-ADP ribose, a signaling molecule generated by the deacetylation of acetylated lysine residues in histones and other proteins. Plays a role in estrogen signaling. Binds to androgen receptor (AR) and amplifies the transactivation function of AR in response to androgen. May play an important role in carcinogenesis and/or progression of hormone-dependent cancers by feed-forward mechanism that activates ESR1 transactivation. Could be an ESR1 coactivator, providing a positive feedback regulatory loop for ESR1 signal transduction. Could be involved in invasive growth by down-regulating CDH1 in endometrial cancer cells. Enhances ESR1-mediated transcription activity. The protein is ADP-ribose glycohydrolase MACROD1 of Mus musculus (Mouse).